Consider the following 189-residue polypeptide: Elongation factor P 2 (189 aa).

Belongs to the elongation factor P family.

The protein localises to the cytoplasm. It functions in the pathway protein biosynthesis; polypeptide chain elongation. In terms of biological role, involved in peptide bond synthesis. Stimulates efficient translation and peptide-bond synthesis on native or reconstituted 70S ribosomes in vitro. Probably functions indirectly by altering the affinity of the ribosome for aminoacyl-tRNA, thus increasing their reactivity as acceptors for peptidyl transferase. This chain is Elongation factor P 2, found in Mesorhizobium japonicum (strain LMG 29417 / CECT 9101 / MAFF 303099) (Mesorhizobium loti (strain MAFF 303099)).